The primary structure comprises 188 residues: ATP synthase subunit p18, mitochondrial (188 aa).

The N-terminal 18 residues, 1–18, are a transit peptide targeting the mitochondrion; sequence MMRRVYSPVFCSVAAARF. PPR repeat units follow at residues 36 to 70, 75 to 109, and 116 to 146; these read TNTA…PPDI, ATLQ…EMQH, and NEES…METE.

F-type ATPases have 2 components, F(1) - the catalytic core - and F(o) - the membrane proton channel. F(1) has five subunits: alpha(3), beta(3), gamma(1), delta(1), epsilon(1), plus the additional subunit P18 (Tb427.05.1710) that is not present in F(1)F(o) ATP synthase from metazoa. Subunit P18 (Tb927.5.1710) interacts with the alpha subunit with a 1:1 stoichiometry; the interaction is direct. Subunit gamma is part of the central stalk. F(o) has three main subunits: a, b and c. The trypanosomal ATPase complex contains additional subunits that are not present in the F(1)F(o) ATP synthase from metazoa.

The protein localises to the mitochondrion. It is found in the mitochondrion inner membrane. In terms of biological role, mitochondrial membrane ATP synthase (F(1)F(o) ATP synthase) produces ATP from ADP in the presence of a proton gradient across the membrane which is generated by electron transport complexes of the respiratory chain. F-type ATPases consist of two structural domains, F(1) - containing the extramembraneous catalytic core, and F(o) - containing the membrane proton channel, linked together by a central stalk and a peripheral stalk. During catalysis, ATP synthesis in the catalytic domain of F(1) is coupled via a rotary mechanism of the central stalk subunits to proton translocation. Subunits alpha and beta form the catalytic core in F(1). Rotation of the central stalk against the surrounding alpha(3)beta(3) subunits leads to hydrolysis of ATP in three separate catalytic sites on the beta subunits. Contrary to the procyclic, insect form that requires F(1)F(o) ATP synthase for ATP synthesis, the bloodstream form relies on ATP hydrolysis by F(1)F(o) ATP synthase to maintain its mitochondrial membrane potential. This is ATP synthase subunit p18, mitochondrial from Trypanosoma brucei brucei.